Consider the following 310-residue polypeptide: Glycine--tRNA ligase alpha subunit (310 aa).

This sequence belongs to the class-II aminoacyl-tRNA synthetase family. In terms of assembly, tetramer of two alpha and two beta subunits.

The protein localises to the cytoplasm. It carries out the reaction tRNA(Gly) + glycine + ATP = glycyl-tRNA(Gly) + AMP + diphosphate. The chain is Glycine--tRNA ligase alpha subunit from Agrobacterium fabrum (strain C58 / ATCC 33970) (Agrobacterium tumefaciens (strain C58)).